The following is a 212-amino-acid chain: Large ribosomal subunit protein uL3 (212 aa).

At Q153 the chain carries N5-methylglutamine.

The protein belongs to the universal ribosomal protein uL3 family. In terms of assembly, part of the 50S ribosomal subunit. Forms a cluster with proteins L14 and L19. Methylated by PrmB.

In terms of biological role, one of the primary rRNA binding proteins, it binds directly near the 3'-end of the 23S rRNA, where it nucleates assembly of the 50S subunit. This is Large ribosomal subunit protein uL3 from Shewanella frigidimarina (strain NCIMB 400).